Consider the following 353-residue polypeptide: Protein RecA (353 aa).

75-82 lines the ATP pocket; that stretch reads GPESSGKT.

It belongs to the RecA family.

The protein localises to the cytoplasm. Its function is as follows. Can catalyze the hydrolysis of ATP in the presence of single-stranded DNA, the ATP-dependent uptake of single-stranded DNA by duplex DNA, and the ATP-dependent hybridization of homologous single-stranded DNAs. It interacts with LexA causing its activation and leading to its autocatalytic cleavage. This Cupriavidus necator (Alcaligenes eutrophus) protein is Protein RecA.